The chain runs to 338 residues: Biotin synthase (338 aa).

The Radical SAM core domain occupies 45–272 (DEVQMSTLLS…QSVVRLSAGR (228 aa)). [4Fe-4S] cluster is bound by residues cysteine 60, cysteine 64, and cysteine 67. Cysteine 104, cysteine 135, cysteine 195, and arginine 267 together coordinate [2Fe-2S] cluster.

Belongs to the radical SAM superfamily. Biotin synthase family. In terms of assembly, homodimer. It depends on [4Fe-4S] cluster as a cofactor. [2Fe-2S] cluster is required as a cofactor.

It catalyses the reaction (4R,5S)-dethiobiotin + (sulfur carrier)-SH + 2 reduced [2Fe-2S]-[ferredoxin] + 2 S-adenosyl-L-methionine = (sulfur carrier)-H + biotin + 2 5'-deoxyadenosine + 2 L-methionine + 2 oxidized [2Fe-2S]-[ferredoxin]. The protein operates within cofactor biosynthesis; biotin biosynthesis; biotin from 7,8-diaminononanoate: step 2/2. Its function is as follows. Catalyzes the conversion of dethiobiotin (DTB) to biotin by the insertion of a sulfur atom into dethiobiotin via a radical-based mechanism. The polypeptide is Biotin synthase (Parvibaculum lavamentivorans (strain DS-1 / DSM 13023 / NCIMB 13966)).